The chain runs to 741 residues: Moderate conductance mechanosensitive channel YbiO (741 aa).

Positions 1-18 (MRWILFILFCLLGAPAHA) are cleaved as a signal peptide. The segment at 22 to 42 (PGVTTTTTTDSTTEPAPEPDI) is disordered. A compositionally biased stretch (low complexity) spans 25 to 34 (TTTTTTDSTT). Transmembrane regions (helical) follow at residues 143–163 (MLAV…LPLY), 185–205 (AMII…LFVG), 225–245 (LFLN…LIFC), 268–288 (LSWL…IISN), 294–314 (IGAL…LYLI), 343–363 (FALV…FFSL), 372–392 (FMMG…FVSG), 432–452 (ILTV…FDFW), 466–486 (ILIR…VLAS), 509–529 (LLTL…IMIV), and 533–553 (IGVN…AISF).

The protein belongs to the MscS (TC 1.A.23) family. As to quaternary structure, homoheptamer.

The protein localises to the cell inner membrane. In terms of biological role, mechanosensitive channel that protects cells against hypoosmotic stress when highly overexpressed. This is Moderate conductance mechanosensitive channel YbiO (ybiO) from Escherichia coli (strain K12).